A 1257-amino-acid chain; its full sequence is uncharacterized protein (1257 aa).

The interval 1–26 (MNFSNKPNKSRKKSNRKNKKSNKSNT) is disordered. Over residues 8–22 (NKSRKKSNRKNKKSN) the composition is skewed to basic residues.

The protein resides in the virion. This is an uncharacterized protein from Acanthamoeba polyphaga mimivirus (APMV).